The chain runs to 464 residues: ATP synthase subunit beta (464 aa).

Residue 148-155 (GGAGVGKT) coordinates ATP.

The protein belongs to the ATPase alpha/beta chains family. In terms of assembly, F-type ATPases have 2 components, CF(1) - the catalytic core - and CF(0) - the membrane proton channel. CF(1) has five subunits: alpha(3), beta(3), gamma(1), delta(1), epsilon(1). CF(0) has three main subunits: a(1), b(2) and c(9-12). The alpha and beta chains form an alternating ring which encloses part of the gamma chain. CF(1) is attached to CF(0) by a central stalk formed by the gamma and epsilon chains, while a peripheral stalk is formed by the delta and b chains.

It is found in the cell inner membrane. The enzyme catalyses ATP + H2O + 4 H(+)(in) = ADP + phosphate + 5 H(+)(out). Its function is as follows. Produces ATP from ADP in the presence of a proton gradient across the membrane. The catalytic sites are hosted primarily by the beta subunits. The sequence is that of ATP synthase subunit beta from Marinobacter nauticus (strain ATCC 700491 / DSM 11845 / VT8) (Marinobacter aquaeolei).